The sequence spans 723 residues: Fatty acid oxidation complex subunit alpha (723 aa).

The tract at residues 1–189 (MIYQADTLQV…KIGLLDAVVE (189 aa)) is enoyl-CoA hydratase/isomerase. Substrate is bound at residue Asp296. The tract at residues 311–723 (SKDTERAAVL…FYGAQQQGSI (413 aa)) is 3-hydroxyacyl-CoA dehydrogenase. Residues Met325, Asp344, 401-403 (VVE), Lys408, and Ser430 each bind NAD(+). The active-site For 3-hydroxyacyl-CoA dehydrogenase activity is the His451. Position 454 (Asn454) interacts with NAD(+). Residues Asn501 and Tyr661 each coordinate substrate.

This sequence in the N-terminal section; belongs to the enoyl-CoA hydratase/isomerase family. The protein in the C-terminal section; belongs to the 3-hydroxyacyl-CoA dehydrogenase family. In terms of assembly, heterotetramer of two alpha chains (FadB) and two beta chains (FadA).

The catalysed reaction is a (3S)-3-hydroxyacyl-CoA + NAD(+) = a 3-oxoacyl-CoA + NADH + H(+). It carries out the reaction a (3S)-3-hydroxyacyl-CoA = a (2E)-enoyl-CoA + H2O. The enzyme catalyses a 4-saturated-(3S)-3-hydroxyacyl-CoA = a (3E)-enoyl-CoA + H2O. It catalyses the reaction (3S)-3-hydroxybutanoyl-CoA = (3R)-3-hydroxybutanoyl-CoA. The catalysed reaction is a (3Z)-enoyl-CoA = a 4-saturated (2E)-enoyl-CoA. It carries out the reaction a (3E)-enoyl-CoA = a 4-saturated (2E)-enoyl-CoA. It participates in lipid metabolism; fatty acid beta-oxidation. In terms of biological role, involved in the aerobic and anaerobic degradation of long-chain fatty acids via beta-oxidation cycle. Catalyzes the formation of 3-oxoacyl-CoA from enoyl-CoA via L-3-hydroxyacyl-CoA. It can also use D-3-hydroxyacyl-CoA and cis-3-enoyl-CoA as substrate. This is Fatty acid oxidation complex subunit alpha from Vibrio parahaemolyticus serotype O3:K6 (strain RIMD 2210633).